Here is a 254-residue protein sequence, read N- to C-terminus: Alcohol dehydrogenase (254 aa).

An NAD(+)-binding site is contributed by 10-33 (FVAGLGGIGLDTNREIVKSGPKNL). Ser-138 contacts substrate. Catalysis depends on Tyr-151, which acts as the Proton acceptor.

It belongs to the short-chain dehydrogenases/reductases (SDR) family. As to quaternary structure, homodimer.

The catalysed reaction is a primary alcohol + NAD(+) = an aldehyde + NADH + H(+). The enzyme catalyses a secondary alcohol + NAD(+) = a ketone + NADH + H(+). In Scaptomyza albovittata (Fruit fly), this protein is Alcohol dehydrogenase (Adh).